A 733-amino-acid chain; its full sequence is Photosystem I P700 chlorophyll a apoprotein A2 (733 aa).

A run of 8 helical transmembrane segments spans residues 46–69 (IFAS…FHVA), 134–157 (LYLG…LHLQ), 174–198 (LNHH…HVAL), 272–290 (IAHH…GHMY), 329–352 (LHIQ…QHMY), 368–394 (AALY…IFFV), 416–438 (AIIS…LYIH), and 516–534 (FLVH…LILV). Residues C558 and C567 each coordinate [4Fe-4S] cluster. 2 helical membrane-spanning segments follow: residues 574–595 (AFYL…YWHW) and 642–664 (LSVW…MFLI). 3 residues coordinate chlorophyll a: H653, M661, and Y669. W670 lines the phylloquinone pocket. A helical membrane pass occupies residues 706-726 (LVGLVHFAVGYILTYAAFVIA).

The protein belongs to the PsaA/PsaB family. As to quaternary structure, the PsaA/B heterodimer binds the P700 chlorophyll special pair and subsequent electron acceptors. PSI consists of a core antenna complex that captures photons, and an electron transfer chain that converts photonic excitation into a charge separation. The eukaryotic PSI reaction center is composed of at least 11 subunits. P700 is a chlorophyll a/chlorophyll a' dimer, A0 is one or more chlorophyll a, A1 is one or both phylloquinones and FX is a shared 4Fe-4S iron-sulfur center. serves as cofactor.

Its subcellular location is the plastid. The protein resides in the chloroplast thylakoid membrane. It carries out the reaction reduced [plastocyanin] + hnu + oxidized [2Fe-2S]-[ferredoxin] = oxidized [plastocyanin] + reduced [2Fe-2S]-[ferredoxin]. In terms of biological role, psaA and PsaB bind P700, the primary electron donor of photosystem I (PSI), as well as the electron acceptors A0, A1 and FX. PSI is a plastocyanin/cytochrome c6-ferredoxin oxidoreductase, converting photonic excitation into a charge separation, which transfers an electron from the donor P700 chlorophyll pair to the spectroscopically characterized acceptors A0, A1, FX, FA and FB in turn. Oxidized P700 is reduced on the lumenal side of the thylakoid membrane by plastocyanin or cytochrome c6. The sequence is that of Photosystem I P700 chlorophyll a apoprotein A2 from Trieres chinensis (Marine centric diatom).